A 621-amino-acid polypeptide reads, in one-letter code: Endoglucanase 25 (621 aa).

Positions 1-26 (MYGRDPWGGPLEINTADSATDDDRSR) are disordered. Over 1–70 (MYGRDPWGGP…DLGCIIVSRK (70 aa)) the chain is Cytoplasmic. The polarized targeting signal 1 (PTS1) stretch occupies residues 48-49 (LL). Residues 59-62 (YVDL) form a polarized targeting signal 2 (PTS2) region. A helical; Signal-anchor for type II membrane protein membrane pass occupies residues 71–91 (IFVWTVGTLVAAALLAGFITL). Topologically, residues 92–621 (IVKTVPRHHP…PPPPPAPWKP (530 aa)) are extracellular. N-linked (GlcNAc...) asparagine glycosylation is found at N108 and N133. Catalysis depends on D165, which acts as the Nucleophile. N-linked (GlcNAc...) asparagine glycosylation is found at N216, N324, N345, N408, and N425. Catalysis depends on residues H513 and D561. N-linked (GlcNAc...) asparagine glycosylation occurs at N567. E570 is an active-site residue.

Belongs to the glycosyl hydrolase 9 (cellulase E) family. Glycosylated. N-glycosylation of KOR in the endoplasmic reticulum followed by N-glycan modifications in the Golgi are essential for catalytic activity. In terms of tissue distribution, highly expressed in roots and stems, at intermediate levels in leaves and flowers, and at lower levels in siliques. Expressed in xylem (at protein level).

The protein resides in the cell membrane. The enzyme catalyses Endohydrolysis of (1-&gt;4)-beta-D-glucosidic linkages in cellulose, lichenin and cereal beta-D-glucans.. Required for cellulose microfibril formation. Involved in cell wall assembly during cell elongation and cell plate maturation in cytokinesis. Required for secondary cell wall formation in the developing xylem. May cycle through different intracellular compartments, including plasma membrane. The sequence is that of Endoglucanase 25 (KOR) from Arabidopsis thaliana (Mouse-ear cress).